A 323-amino-acid chain; its full sequence is Beta-ketoacyl-[acyl-carrier-protein] synthase III (323 aa).

Residues Cys112 and His248 contribute to the active site. The segment at 249–253 (QANRR) is ACP-binding. Asn278 is a catalytic residue.

This sequence belongs to the thiolase-like superfamily. FabH family. As to quaternary structure, homodimer.

Its subcellular location is the cytoplasm. The enzyme catalyses malonyl-[ACP] + acetyl-CoA + H(+) = 3-oxobutanoyl-[ACP] + CO2 + CoA. The protein operates within lipid metabolism; fatty acid biosynthesis. Functionally, catalyzes the condensation reaction of fatty acid synthesis by the addition to an acyl acceptor of two carbons from malonyl-ACP. Catalyzes the first condensation reaction which initiates fatty acid synthesis and may therefore play a role in governing the total rate of fatty acid production. Possesses both acetoacetyl-ACP synthase and acetyl transacylase activities. Its substrate specificity determines the biosynthesis of branched-chain and/or straight-chain of fatty acids. This chain is Beta-ketoacyl-[acyl-carrier-protein] synthase III, found in Streptococcus agalactiae serotype Ia (strain ATCC 27591 / A909 / CDC SS700).